Consider the following 426-residue polypeptide: Cuticle-degrading serine protease (426 aa).

The N-terminal stretch at 1-21 (MLTNGLISLLAIAGLATNAFA) is a signal peptide. Residues 22-123 (GPIRKVSNAG…VEQDTVVTTY (102 aa)) constitute a propeptide that is removed on maturation. The 84-residue stretch at 39-122 (KYIVVLKKGL…YVEQDTVVTT (84 aa)) folds into the Inhibitor I9 domain. In terms of domain architecture, Peptidase S8 spans 130–426 (TWGLDRISHE…TNHQVTIVAS (297 aa)). The active-site Charge relay system is the Asp164. Asn178 carries an N-linked (GlcNAc...) asparagine glycan. Residue His200 is the Charge relay system of the active site. Residue Asn252 is glycosylated (N-linked (GlcNAc...) asparagine). The active-site Charge relay system is the Ser353.

Belongs to the peptidase S8 family.

The protein resides in the secreted. Its activity is regulated as follows. Inhibited by PMSF, SSI, the peptide Phe-Val and by Phe, but not by EDTA. Functionally, hydrolyzes gelatin, casein, the chromogenic substrate azocoll and the cuticle of the nematode P.redivivus. Immobilizes P.redivivus. In Orbilia oligospora (Nematode-trapping fungus), this protein is Cuticle-degrading serine protease.